Reading from the N-terminus, the 344-residue chain is Holliday junction branch migration complex subunit RuvB (344 aa).

The segment at 1-180 (MSRIVSGEAQ…FGIPVRLEFY (180 aa)) is large ATPase domain (RuvB-L). 9 residues coordinate ATP: L19, R20, G61, K64, T65, T66, R170, Y180, and R217. T65 lines the Mg(2+) pocket. The small ATPAse domain (RuvB-S) stretch occupies residues 181 to 251 (THDELARVLL…AAAAALARLD (71 aa)). Positions 254–344 (EVGLDALDRR…AAPPADLFDK (91 aa)) are head domain (RuvB-H). 3 residues coordinate DNA: R290, R309, and R314.

It belongs to the RuvB family. Homohexamer. Forms an RuvA(8)-RuvB(12)-Holliday junction (HJ) complex. HJ DNA is sandwiched between 2 RuvA tetramers; dsDNA enters through RuvA and exits via RuvB. An RuvB hexamer assembles on each DNA strand where it exits the tetramer. Each RuvB hexamer is contacted by two RuvA subunits (via domain III) on 2 adjacent RuvB subunits; this complex drives branch migration. In the full resolvosome a probable DNA-RuvA(4)-RuvB(12)-RuvC(2) complex forms which resolves the HJ.

It is found in the cytoplasm. It catalyses the reaction ATP + H2O = ADP + phosphate + H(+). Its function is as follows. The RuvA-RuvB-RuvC complex processes Holliday junction (HJ) DNA during genetic recombination and DNA repair, while the RuvA-RuvB complex plays an important role in the rescue of blocked DNA replication forks via replication fork reversal (RFR). RuvA specifically binds to HJ cruciform DNA, conferring on it an open structure. The RuvB hexamer acts as an ATP-dependent pump, pulling dsDNA into and through the RuvAB complex. RuvB forms 2 homohexamers on either side of HJ DNA bound by 1 or 2 RuvA tetramers; 4 subunits per hexamer contact DNA at a time. Coordinated motions by a converter formed by DNA-disengaged RuvB subunits stimulates ATP hydrolysis and nucleotide exchange. Immobilization of the converter enables RuvB to convert the ATP-contained energy into a lever motion, pulling 2 nucleotides of DNA out of the RuvA tetramer per ATP hydrolyzed, thus driving DNA branch migration. The RuvB motors rotate together with the DNA substrate, which together with the progressing nucleotide cycle form the mechanistic basis for DNA recombination by continuous HJ branch migration. Branch migration allows RuvC to scan DNA until it finds its consensus sequence, where it cleaves and resolves cruciform DNA. This is Holliday junction branch migration complex subunit RuvB from Phenylobacterium zucineum (strain HLK1).